Reading from the N-terminus, the 286-residue chain is Single myb histone 5 (286 aa).

Positions 1-61 (MGAPKQRWTS…KWRNMNVIVT (61 aa)) constitute an HTH myb-type domain. The segment at residues 28-57 (WRMILNDPELSSTLRYRSNVDLKDKWRNMN) is a DNA-binding region (H-T-H motif). Residues 122–190 (SHSRLDNIIM…KVNRKYRIAP (69 aa)) form the H15 domain. A coiled-coil region spans residues 229–277 (EAAAAAAAHAVAEAEAIMAEAEAAAREAEAAEAEARAAQAFAEAAVLTL).

The protein belongs to the histone H1/H5 family. SMH subfamily. Forms a homodimer and heterodimers.

It is found in the nucleus. The protein localises to the chromosome. Its subcellular location is the nucleolus. The protein resides in the telomere. Functionally, binds preferentially double-stranded telomeric repeats, but may also bind to the single telomeric strand. The sequence is that of Single myb histone 5 (SMH5) from Zea mays (Maize).